The primary structure comprises 160 residues: UPF0262 protein Mmar10_1128 (160 aa).

This sequence belongs to the UPF0262 family.

The sequence is that of UPF0262 protein Mmar10_1128 from Maricaulis maris (strain MCS10) (Caulobacter maris).